Consider the following 238-residue polypeptide: 7-cyano-7-deazaguanine synthase (238 aa).

14-24 (FSGGQDSATCL) contacts ATP. The Zn(2+) site is built by Cys-202, Cys-217, Cys-220, and Cys-223.

The protein belongs to the QueC family. The cofactor is Zn(2+).

It catalyses the reaction 7-carboxy-7-deazaguanine + NH4(+) + ATP = 7-cyano-7-deazaguanine + ADP + phosphate + H2O + H(+). It participates in purine metabolism; 7-cyano-7-deazaguanine biosynthesis. Catalyzes the ATP-dependent conversion of 7-carboxy-7-deazaguanine (CDG) to 7-cyano-7-deazaguanine (preQ(0)). The sequence is that of 7-cyano-7-deazaguanine synthase from Nitrobacter winogradskyi (strain ATCC 25391 / DSM 10237 / CIP 104748 / NCIMB 11846 / Nb-255).